A 311-amino-acid chain; its full sequence is Olfactory receptor 5P3 (311 aa).

The Extracellular portion of the chain corresponds to 1–25 (MGTGNDTTVVEFTLLGLSEDTTVCA). N-linked (GlcNAc...) asparagine glycosylation occurs at asparagine 5. The helical transmembrane segment at 26 to 46 (ILFLVFLGIYVVTLMGNISII) threads the bilayer. Over 47–54 (VLIRRSHH) the chain is Cytoplasmic. Residues 55–75 (LHTPMYIFLCHLAFVDIGYSS) traverse the membrane as a helical segment. Residues 76–99 (SVTPVMLMSFLRKETSLPVAGCVA) are Extracellular-facing. Cysteines 97 and 189 form a disulfide. A helical transmembrane segment spans residues 100–120 (QLCSVVTFGTAECFLLAAMAY). Residues 121–139 (DRYVAICSPLLYSTCMSPG) lie on the Cytoplasmic side of the membrane. A helical membrane pass occupies residues 140–160 (VCIILVGMSYLGGCVNAWTFI). Residues 161–196 (GCLLRLSFCGPNKVNHFFCDYSPLLKLACSHDFTFE) are Extracellular-facing. A helical transmembrane segment spans residues 197–217 (IIPAISSGSIIVATVCVIAIS). Residues 218–237 (YIYILITILKMHSTKGRHKA) are Cytoplasmic-facing. A helical membrane pass occupies residues 238-258 (FSTCTSHLTAVTLFYGTITFI). The Extracellular portion of the chain corresponds to 259–271 (YVMPKSSYSTDQN). Residues 272 to 292 (KVVSVFYTVVIPMLNPLIYSL) form a helical membrane-spanning segment. Over 293–311 (RNKEIKGALKRELRIKIFS) the chain is Cytoplasmic.

The protein belongs to the G-protein coupled receptor 1 family. In terms of tissue distribution, expressed in the tongue.

The protein resides in the cell membrane. Its function is as follows. Odorant receptor (Potential). May be involved in taste perception. This is Olfactory receptor 5P3 (OR5P3) from Homo sapiens (Human).